We begin with the raw amino-acid sequence, 666 residues long: tRNA 5-methylaminomethyl-2-thiouridine biosynthesis bifunctional protein MnmC (666 aa).

A tRNA (mnm(5)s(2)U34)-methyltransferase region spans residues methionine 1–glutamate 245. Residues isoleucine 270–lysine 666 form an FAD-dependent cmnm(5)s(2)U34 oxidoreductase region.

In the N-terminal section; belongs to the methyltransferase superfamily. tRNA (mnm(5)s(2)U34)-methyltransferase family. It in the C-terminal section; belongs to the DAO family. Requires FAD as cofactor.

It is found in the cytoplasm. The catalysed reaction is 5-aminomethyl-2-thiouridine(34) in tRNA + S-adenosyl-L-methionine = 5-methylaminomethyl-2-thiouridine(34) in tRNA + S-adenosyl-L-homocysteine + H(+). In terms of biological role, catalyzes the last two steps in the biosynthesis of 5-methylaminomethyl-2-thiouridine (mnm(5)s(2)U) at the wobble position (U34) in tRNA. Catalyzes the FAD-dependent demodification of cmnm(5)s(2)U34 to nm(5)s(2)U34, followed by the transfer of a methyl group from S-adenosyl-L-methionine to nm(5)s(2)U34, to form mnm(5)s(2)U34. The polypeptide is tRNA 5-methylaminomethyl-2-thiouridine biosynthesis bifunctional protein MnmC (Salmonella arizonae (strain ATCC BAA-731 / CDC346-86 / RSK2980)).